The primary structure comprises 275 residues: 4-hydroxy-3-methylbut-2-enyl diphosphate reductase (275 aa).

[4Fe-4S] cluster is bound at residue Cys-12. Positions 36 and 70 each coordinate (2E)-4-hydroxy-3-methylbut-2-enyl diphosphate. The dimethylallyl diphosphate site is built by His-36 and His-70. The isopentenyl diphosphate site is built by His-36 and His-70. Residue Cys-92 coordinates [4Fe-4S] cluster. Position 120 (His-120) interacts with (2E)-4-hydroxy-3-methylbut-2-enyl diphosphate. His-120 is a binding site for dimethylallyl diphosphate. An isopentenyl diphosphate-binding site is contributed by His-120. Catalysis depends on Glu-122, which acts as the Proton donor. Thr-157 is a binding site for (2E)-4-hydroxy-3-methylbut-2-enyl diphosphate. Cys-185 is a [4Fe-4S] cluster binding site. Residues Ser-213, Ser-214, Asn-215, and Ser-257 each coordinate (2E)-4-hydroxy-3-methylbut-2-enyl diphosphate. Ser-213, Ser-214, Asn-215, and Ser-257 together coordinate dimethylallyl diphosphate. Isopentenyl diphosphate-binding residues include Ser-213, Ser-214, Asn-215, and Ser-257.

Belongs to the IspH family. It depends on [4Fe-4S] cluster as a cofactor.

It catalyses the reaction isopentenyl diphosphate + 2 oxidized [2Fe-2S]-[ferredoxin] + H2O = (2E)-4-hydroxy-3-methylbut-2-enyl diphosphate + 2 reduced [2Fe-2S]-[ferredoxin] + 2 H(+). It carries out the reaction dimethylallyl diphosphate + 2 oxidized [2Fe-2S]-[ferredoxin] + H2O = (2E)-4-hydroxy-3-methylbut-2-enyl diphosphate + 2 reduced [2Fe-2S]-[ferredoxin] + 2 H(+). It functions in the pathway isoprenoid biosynthesis; dimethylallyl diphosphate biosynthesis; dimethylallyl diphosphate from (2E)-4-hydroxy-3-methylbutenyl diphosphate: step 1/1. Its pathway is isoprenoid biosynthesis; isopentenyl diphosphate biosynthesis via DXP pathway; isopentenyl diphosphate from 1-deoxy-D-xylulose 5-phosphate: step 6/6. Its function is as follows. Catalyzes the conversion of 1-hydroxy-2-methyl-2-(E)-butenyl 4-diphosphate (HMBPP) into a mixture of isopentenyl diphosphate (IPP) and dimethylallyl diphosphate (DMAPP). Acts in the terminal step of the DOXP/MEP pathway for isoprenoid precursor biosynthesis. The sequence is that of 4-hydroxy-3-methylbut-2-enyl diphosphate reductase from Nitratiruptor sp. (strain SB155-2).